Here is a 92-residue protein sequence, read N- to C-terminus: Small ribosomal subunit protein uS19 (92 aa).

The protein belongs to the universal ribosomal protein uS19 family.

Protein S19 forms a complex with S13 that binds strongly to the 16S ribosomal RNA. The chain is Small ribosomal subunit protein uS19 from Tolumonas auensis (strain DSM 9187 / NBRC 110442 / TA 4).